The following is a 277-amino-acid chain: Ribonuclease HII (277 aa).

The 189-residue stretch at 72-260 (EYIAGIDEAG…IKEMIEMKKE (189 aa)) folds into the RNase H type-2 domain. Positions 78, 79, and 170 each coordinate a divalent metal cation.

The protein belongs to the RNase HII family. The cofactor is Mn(2+). Requires Mg(2+) as cofactor.

The protein resides in the cytoplasm. The catalysed reaction is Endonucleolytic cleavage to 5'-phosphomonoester.. Functionally, endonuclease that specifically degrades the RNA of RNA-DNA hybrids. The chain is Ribonuclease HII from Geobacillus sp. (strain WCH70).